The chain runs to 451 residues: uncharacterized protein (451 aa).

The signal sequence occupies residues 1–18; that stretch reads MRTRITLALAVLLLLLAG. Cys19 carries N-palmitoyl cysteine lipidation. Residue Cys19 is the site of S-diacylglycerol cysteine attachment. The tract at residues 424-451 is disordered; that stretch reads TSADPPPGVPRAGKRNIRDATSRLPSTP.

The protein localises to the cell membrane. May participate in oleandomycin glycosylation and secretion during antibiotic production. This is an uncharacterized protein from Streptomyces antibioticus.